Consider the following 204-residue polypeptide: Phosphoribosyl-dephospho-CoA transferase (204 aa).

Active-site residues include D129 and D131.

The protein belongs to the MdcG family.

It carries out the reaction apo-[malonate decarboxylase ACP] + 2'-(5''-triphospho-alpha-D-ribosyl)-3'-dephospho-CoA = holo-[malonate decarboxylase ACP] + diphosphate. Functionally, transfers 2'-(5-triphosphoribosyl)-3'-dephosphocoenzyme-A to the apo-[acyl-carrier-protein] of the malonate decarboxylase to yield holo-[acyl-carrier-protein]. The sequence is that of Phosphoribosyl-dephospho-CoA transferase from Pseudomonas putida (strain GB-1).